The chain runs to 698 residues: UvrABC system protein B (698 aa).

Residues N25–N183 form the Helicase ATP-binding domain. Position 38-45 (G38–T45) interacts with ATP. The Beta-hairpin signature appears at Y91–I114. The 167-residue stretch at Q428 to T594 folds into the Helicase C-terminal domain. The UVR domain maps to F622–T657.

It belongs to the UvrB family. In terms of assembly, forms a heterotetramer with UvrA during the search for lesions. Interacts with UvrC in an incision complex.

Its subcellular location is the cytoplasm. In terms of biological role, the UvrABC repair system catalyzes the recognition and processing of DNA lesions. A damage recognition complex composed of 2 UvrA and 2 UvrB subunits scans DNA for abnormalities. Upon binding of the UvrA(2)B(2) complex to a putative damaged site, the DNA wraps around one UvrB monomer. DNA wrap is dependent on ATP binding by UvrB and probably causes local melting of the DNA helix, facilitating insertion of UvrB beta-hairpin between the DNA strands. Then UvrB probes one DNA strand for the presence of a lesion. If a lesion is found the UvrA subunits dissociate and the UvrB-DNA preincision complex is formed. This complex is subsequently bound by UvrC and the second UvrB is released. If no lesion is found, the DNA wraps around the other UvrB subunit that will check the other stand for damage. This Herpetosiphon aurantiacus (strain ATCC 23779 / DSM 785 / 114-95) protein is UvrABC system protein B.